A 437-amino-acid polypeptide reads, in one-letter code: Transcriptional modulator WTM1 (437 aa).

A WD 1 repeat occupies 103–144 (YQGETVSKMAYLDKTGETTLLSMSKNGSLAWFKEGIKVPIHI). Phosphothreonine is present on Thr-187. Ser-200 carries the phosphoserine modification. WD repeat units follow at residues 221-259 (PGTTVTHTVRFFDNHIFASCSDDNILRFWDTRTSDKPIW), 264-304 (PKNG…AATT), and 326-366 (AGGD…SKYN). The disordered stretch occupies residues 368–404 (DDTIAPPQDATEESQTKSLRFLHKGGSRRSPKQIGRR). Thr-370 is modified (phosphothreonine). A compositionally biased stretch (basic residues) spans 387–402 (RFLHKGGSRRSPKQIG). Thr-406 carries the post-translational modification Phosphothreonine.

Interacts with KAP122.

It is found in the cytoplasm. Its subcellular location is the nucleus. In terms of biological role, transcriptional modulator with roles in meiotic regulation and silencing. Acts either as an adapter to facilitate nuclear import by KAP122 of the RNR2-RNR4 heterodimer, also called beta-beta' subunit, which corresponds to the small subunit of the ribonucleotide reductase (RNR); or as an anchor to retain RNR2-RNR4 in the nucleus. In Saccharomyces cerevisiae (strain ATCC 204508 / S288c) (Baker's yeast), this protein is Transcriptional modulator WTM1 (WTM1).